The chain runs to 656 residues: Protein sly1 homolog (656 aa).

4 consecutive repeat copies span residues 85-121 (DENL…NLAA), 203-245 (RNSA…FSFQ), 419-456 (LELL…ERLR), and 460-496 (QSAG…GGGT). The interval 85–496 (DENLDRIQQD…QATQYEGGGT (412 aa)) is 4 X approximate repeats.

It belongs to the STXBP/unc-18/SEC1 family.

Its subcellular location is the cytoplasm. It is found in the membrane. Its function is as follows. Non-vital for development. The polypeptide is Protein sly1 homolog (Slh) (Drosophila virilis (Fruit fly)).